The sequence spans 2528 residues: Reducing polyketide synthase PKS1 (2528 aa).

The Ketosynthase family 3 (KS3) domain occupies 11–436 (ITPIAVVGMS…GANVHAILES (426 aa)). Residues C186, H321, and H359 each act as for beta-ketoacyl synthase activity in the active site. Residues 573 to 868 (FVFTGQGAQW…LGGPISQVID (296 aa)) form a malonyl-CoA:ACP transacylase (MAT) region. The tract at residues 954–1092 (LDLIGVFDVH…GLISVLKSSK (139 aa)) is N-terminal hotdog fold. One can recognise a PKS/mFAS DH domain in the interval 954–1278 (LDLIGVFDVH…LVALDRPNSS (325 aa)). A dehydratase (DH) domain region spans residues 956 to 1277 (LIGVFDVHSS…TLVALDRPNS (322 aa)). H986 (proton acceptor; for dehydratase activity) is an active-site residue. The tract at residues 1122-1278 (KTEWDVKDMY…LVALDRPNSS (157 aa)) is C-terminal hotdog fold. D1187 (proton donor; for dehydratase activity) is an active-site residue. The interval 1827–2139 (GLLDSLHFTV…TGRHMGKMVA (313 aa)) is enoyl reductase (ER) domain. The ketoreductase (KR) domain stretch occupies residues 2164 to 2341 (ASYLLVGGVG…ATVIDIGAVH (178 aa)). In terms of domain architecture, Carrier spans 2442–2519 (SAVTIVLSAL…ALAVKIAARS (78 aa)). S2479 is subject to O-(pantetheine 4'-phosphoryl)serine.

It functions in the pathway mycotoxin biosynthesis. Functionally, reducing polyketide synthase (PKS); part of the Tox1A locus, one of the 2 loci that mediate the biosynthesis of T-toxin, a family of linear polyketides 37 to 45 carbons in length, of which the major component is 41 carbons, and which leads to high virulence to maize. One of the PKSs (PKS1 or PKS2) could synthesize a precursor, used subsequently by the other PKS as starter unit, to add additional carbons. Variability in the length of the final carbon backbone C35-47 could be achieved by varying the number of condensation cycles, or use of different starter or extender units or might be due to decarboxylation of the penultimate product, catalyzed by DEC1. Additional proteins are required for the biosynthesis of T-toxin, including oxidoreductases RED1, RED2, RED3, LAM1 and OXI1, as well as esterase TOX9. This is Reducing polyketide synthase PKS1 from Cochliobolus heterostrophus (strain C4 / ATCC 48331 / race T) (Southern corn leaf blight fungus).